We begin with the raw amino-acid sequence, 270 residues long: Replication protein A 32 kDa subunit (270 aa).

Met-1 is modified (N-acetylmethionine). 2 positions are modified to phosphoserine; by PRKDC: Ser-4 and Ser-8. The residue at position 21 (Thr-21) is a Phosphothreonine; by PRKDC. Positions 22–41 (QSPGGFGSPTPSQAEKKSRA) are disordered. At Ser-23 the chain carries Phosphoserine; by CDK2. Ser-29 carries the post-translational modification Phosphoserine; by CDK1. Ser-33 carries the phosphoserine; by PRKDC modification. Glycyl lysine isopeptide (Lys-Gly) (interchain with G-Cter in ubiquitin) cross-links involve residues Lys-37 and Lys-38. The OB DNA-binding region spans 74-148 (VTIVGIIRHA…KSLVAFKIIP (75 aa)). The segment at 187–270 (GMGEPGNFSG…DDHFKSTDAE (84 aa)) is interaction with RAD52, TIPIN, UNG and XPA.

The protein belongs to the replication factor A protein 2 family. Component of the replication protein A complex (RPA/RP-A), a heterotrimeric complex composed of RPA1, RPA2 and RPA3. Interacts with PRPF19; the PRP19-CDC5L complex is recruited to the sites of DNA repair where it ubiquitinates the replication protein A complex (RPA). Interacts with SERTAD3. Interacts with TIPIN. Interacts with TIMELESS. Interacts with PPP4R2; the interaction is direct, DNA damage-dependent and mediates the recruitment of the PP4 catalytic subunit PPP4C. Interacts (hyperphosphorylated) with RAD51. Interacts with SMARCAL1; the interaction is direct and mediates the recruitment to the RPA complex of SMARCAL1. Interacts with RAD52 and XPA; those interactions are direct and associate RAD52 and XPA to the RPA complex. Interacts with FBH1. Interacts with ETAA1; the interaction is direct and promotes ETAA1 recruitment at stalled replication forks. Interacts with DDI2. Interacts (in unphosphorylated form via N-terminus) with EIF4EBP3; the interaction enhances EIF4EBP3-mediated inhibition of EIF4E-mediated mRNA nuclear export. Interacts with nuclear UNG (isoform 2); this interaction mediates UNG recruitment to RPA-coated single-stranded DNA at stalled replication forks. In terms of processing, differentially phosphorylated throughout the cell cycle, becoming phosphorylated at the G1-S transition and dephosphorylated in late mitosis. Mainly phosphorylated at Ser-23 and Ser-29, by cyclin A-CDK2 and cyclin B-CDK1, respectively during DNA replication and mitosis. Dephosphorylation may require the serine/threonine-protein phosphatase 4. Phosphorylation at Ser-23 and Ser-29 is a prerequisite for further phosphorylation. Becomes hyperphosphorylated on additional residues including Ser-4, Ser-8, Thr-21 and Ser-33 in response to DNA damage. Hyperphosphorylation is mediated by ATM, ATR and PRKDC. Primarily recruited to DNA repair nuclear foci as a hypophosphorylated form it undergoes subsequent hyperphosphorylation, catalyzed by ATR. Hyperphosphorylation is required for RAD51 recruitment to chromatin and efficient DNA repair. Phosphorylation at Thr-21 depends upon RFWD3 presence. Post-translationally, DNA damage-induced 'Lys-63'-linked polyubiquitination by PRPF19 mediates ATRIP recruitment to the RPA complex at sites of DNA damage and activation of ATR. Ubiquitinated by RFWD3 at stalled replication forks in response to DNA damage: ubiquitination by RFWD3 does not lead to degradation by the proteasome and promotes removal of the RPA complex from stalled replication forks, promoting homologous recombination.

It is found in the nucleus. The protein localises to the PML body. As part of the heterotrimeric replication protein A complex (RPA/RP-A), binds and stabilizes single-stranded DNA intermediates, that form during DNA replication or upon DNA stress. It prevents their reannealing and in parallel, recruits and activates different proteins and complexes involved in DNA metabolism. Thereby, it plays an essential role both in DNA replication and the cellular response to DNA damage. In the cellular response to DNA damage, the RPA complex controls DNA repair and DNA damage checkpoint activation. Through recruitment of ATRIP activates the ATR kinase a master regulator of the DNA damage response. It is required for the recruitment of the DNA double-strand break repair factors RAD51 and RAD52 to chromatin in response to DNA damage. Also recruits to sites of DNA damage proteins like XPA and XPG that are involved in nucleotide excision repair and is required for this mechanism of DNA repair. Also plays a role in base excision repair (BER) probably through interaction with UNG. Also recruits SMARCAL1/HARP, which is involved in replication fork restart, to sites of DNA damage. May also play a role in telomere maintenance. The sequence is that of Replication protein A 32 kDa subunit (Rpa2) from Rattus norvegicus (Rat).